The chain runs to 150 residues: MSGELSNRFQGGKAFGLLKARQERRLAEINREFLCDQKYSDEENLPEKLTAFKEKYMEFDLNNEGEIDLMSLKRMMEKLGVPKTHLEMKKMISEVTGGVSDTISYRDFVNMMLGKRSAVLKLVMMFEGKANESSPKPVGPPPERDIASLP.

An N-acetylserine modification is found at Ser-2. Ser-2 is modified (phosphoserine). One can recognise an EF-hand 1 domain in the interval 47–82 (EKLTAFKEKYMEFDLNNEGEIDLMSLKRMMEKLGVP). Asp-60, Asn-62, Glu-64, and Glu-66 together coordinate Ca(2+). One can recognise an EF-hand 2; degenerate domain in the interval 83–117 (KTHLEMKKMISEVTGGVSDTISYRDFVNMMLGKRS). Positions 129–150 (KANESSPKPVGPPPERDIASLP) are disordered. Ser-134 is modified (phosphoserine).

As to quaternary structure, homodimer (Potential). Monomer.

It localises to the cytoplasm. It is found in the cytoskeleton. The protein localises to the cell projection. Its subcellular location is the ruffle membrane. Functionally, actin-binding protein that promotes actin bundling. May neither bind calcium nor depend on calcium for function. The protein is Allograft inflammatory factor 1-like (AIF1L) of Homo sapiens (Human).